We begin with the raw amino-acid sequence, 926 residues long: Armadillo repeat-containing protein 5 (926 aa).

Residues 82-104 (PAPSQAASGSAPSSVASAGSTPG) are compositionally biased toward low complexity. A disordered region spans residues 82–111 (PAPSQAASGSAPSSVASAGSTPGHAPAAES). 7 ARM repeats span residues 139–179 (GACR…NLAM), 181–221 (PESC…NLAD), 223–263 (PQHR…ELSR), 267–306 (RACA…NLCA), 307–354 (QGLV…LCRE), 355–399 (AINR…DTGA), and 401–440 (GKLQ…EERT). Residue S337 is modified to Phosphoserine. The segment at 472–516 (WSPERCPMPEPSESVSPTPGQTSMSTPRTLRKPGRIPAATPEEPW) is disordered. Over residues 484–499 (ESVSPTPGQTSMSTPR) the composition is skewed to polar residues. Residues 745–813 (PDLHFVLDSG…LHGCRGCGAA (69 aa)) enclose the BTB domain.

Substrate-recognition component of the BCR(ARMC5) E3 ubiquitin ligase complex, at least composed of CUL3, ARMC5 and RBX1. Ubiquitinated by a BCR (BTB-CUL3-RBX1) E3 ubiquitin ligase complex, leading to its degradation. Deubiquitinated by USP7. As to expression, expression is high in the thymus, stomach, bone marrow and lymphatic tissues (including lymph nodes and intestinal wall). Also expressed in the adrenal gland, skin and in brain structures, with noticeable levels found in the cerebellum.

Its subcellular location is the nucleus. The protein resides in the chromosome. It is found in the cytoplasm. It participates in protein modification; protein ubiquitination. Functionally, substrate-recognition component of a BCR (BTB-CUL3-RBX1) E3 ubiquitin ligase complex that terminates RNA polymerase II (Pol II) transcription in the promoter-proximal region of genes. The BCR(ARMC5) complex provides a quality checkpoint during transcription elongation by driving premature transcription termination of transcripts that are unfavorably configured for transcriptional elongation: the BCR(ARMC5) complex acts by mediating ubiquitination of Pol II subunit POLR2A phosphorylated at 'Ser-5' of the C-terminal domain (CTD), leading to POLR2A degradation. The BCR(ARMC5) complex acts in parallel of the integrator complex and is specific for RNA Pol II originating from the promoter-proximal zone: it does not ubiquitinate elongation-stalled RNA Pol II. The BCR(ARMC5) complex also acts as a regulator of fatty acid desaturation by mediating ubiquitination and degradation of SCAP-free SREBF1 and SREBF2. Involved in fetal development, T-cell function and adrenal gland growth homeostasis. Plays a role in steroidogenesis, modulates steroidogenic enzymes expression and cortisol production. This chain is Armadillo repeat-containing protein 5, found in Mus musculus (Mouse).